The sequence spans 543 residues: MLRYEERKLNNLTLSSFSKSGVSSDTRLYIAKENTDKAYVAPEKFSSKVLTWLGKMPLFKNTEVVQKHTENIRVQNQKILQTFLQALTEKYGEKAVNNALYMSSINMNKPLTQRLVVQITECVKGADGGFINIIKNKDNVGVMNAALVIKGGDTKVTEQNNDVGAESKQPLLDIALKGLKRTIPQLEQMDGNSLRENFQEMASGNGPLRSLMTNLQSLNKIPEAKQLNDYVTTLKNIQIGADRFSQWGTCGGEVERWIDKASTHELTQAVKKIHVIAKELKNVTAEFEKIKAGASMPQTMNGPTLGLARFAVSSIPINQQTQVKLSDGMPVPVNTLTFDGKPVALAGSYPKNTPDALEAHMKMLLEKECSCLAVLTSEDQMQAKQLPAYFRGSYTFGEVHTNSQKVSSASQGGAIDQYNMQLSCGEKRYTIPVLHVKNWPDHQPLPSTDQLEYLADRVKNSNQNGAPGRSSSDKHLPMIHCLGGVGRTGTMAAALVLKDNPHSNLEQVRADFRNSRNNRMLEDASQFVQLKAMQAQLLMTTAS.

The segment at 35–139 (TDKAYVAPEK…FINIIKNKDN (105 aa)) is chaperone-binding. The 132-residue stretch at 162-293 (DVGAESKQPL…TAEFEKIKAG (132 aa)) folds into the Bacterial Rho-GAP domain. The Tyrosine-protein phosphatase domain occupies 315-543 (IPINQQTQVK…QAQLLMTTAS (229 aa)). C481 acts as the Phosphocysteine intermediate in catalysis.

As to quaternary structure, forms a complex with SicP.

It is found in the secreted. The protein localises to the host cytoplasm. The enzyme catalyses O-phospho-L-tyrosyl-[protein] + H2O = L-tyrosyl-[protein] + phosphate. Functionally, effector proteins function to alter host cell physiology and promote bacterial survival in host tissues. This protein includes tyrosine phosphatase and GTPase activating protein (GAP) activities. After bacterial internalization, GAP mediates the reversal of the cytoskeletal changes induced by SopE. This function is independent of its tyrosine phosphatase activity, which remains unclear. The chain is Secreted effector protein SptP (sptP) from Salmonella paratyphi A (strain ATCC 9150 / SARB42).